The primary structure comprises 246 residues: 3-deoxy-manno-octulosonate cytidylyltransferase (246 aa).

It belongs to the KdsB family.

It localises to the cytoplasm. It catalyses the reaction 3-deoxy-alpha-D-manno-oct-2-ulosonate + CTP = CMP-3-deoxy-beta-D-manno-octulosonate + diphosphate. It participates in nucleotide-sugar biosynthesis; CMP-3-deoxy-D-manno-octulosonate biosynthesis; CMP-3-deoxy-D-manno-octulosonate from 3-deoxy-D-manno-octulosonate and CTP: step 1/1. The protein operates within bacterial outer membrane biogenesis; lipopolysaccharide biosynthesis. Its function is as follows. Activates KDO (a required 8-carbon sugar) for incorporation into bacterial lipopolysaccharide in Gram-negative bacteria. The polypeptide is 3-deoxy-manno-octulosonate cytidylyltransferase (Leptospira borgpetersenii serovar Hardjo-bovis (strain JB197)).